A 222-amino-acid polypeptide reads, in one-letter code: CASP-like protein 1E1 (222 aa).

The Cytoplasmic portion of the chain corresponds to 1-59 (MEASRVKPGFNGVGMAAGSVNGSSRRPGPGLGYGYGYYMGSGAAAGGSGRAAQAPVDGC). The helical transmembrane segment at 60-80 (SVALRVFVVASTLVSAVVMGV) threads the bilayer. At 81–110 (DRQTRTIQITITDALPPLEVPLTANWSYSS) the chain is on the extracellular side. Asn105 carries N-linked (GlcNAc...) asparagine glycosylation. A helical transmembrane segment spans residues 111-131 (AFVYFVVANAMVCLFSAAALA). The Cytoplasmic segment spans residues 132–146 (ACRSRAAMVPVMVGD). The chain crosses the membrane as a helical span at residues 147 to 167 (LLALALLYSAVGAAAEFGILG). The Extracellular portion of the chain corresponds to 168 to 189 (ERGNSHVRWAKVCNVYGRFCDR). Residues 190–210 (AMAAVIVSLIGAFANLVLLML) form a helical membrane-spanning segment. Residues 211–222 (NILTIHKSSSYY) are Cytoplasmic-facing.

It belongs to the Casparian strip membrane proteins (CASP) family. In terms of assembly, homodimer and heterodimers.

The protein resides in the cell membrane. The chain is CASP-like protein 1E1 from Sorghum bicolor (Sorghum).